A 493-amino-acid chain; its full sequence is Alpha-amylase-related protein (493 aa).

A signal peptide spans 1–19; it reads MFKFALTLTLCLAGSLSLA. Gln20 is modified (pyrrolidone carboxylic acid). Cysteines 47 and 103 form a disulfide. Positions 117, 168, and 177 each coordinate Ca(2+). Cys156 and Cys170 form a disulfide bridge. Arg205 lines the chloride pocket. The active-site Nucleophile is the Asp207. Position 211 (His211) interacts with Ca(2+). Catalysis depends on Glu244, which acts as the Proton donor. 2 residues coordinate chloride: Asn307 and Arg342. 3 disulfides stabilise this stretch: Cys375–Cys381, Cys417–Cys440, and Cys447–Cys459.

This sequence belongs to the glycosyl hydrolase 13 family. In terms of assembly, monomer. Ca(2+) is required as a cofactor. Chloride serves as cofactor. As to expression, midgut and fat body.

It is found in the secreted. It carries out the reaction Endohydrolysis of (1-&gt;4)-alpha-D-glucosidic linkages in polysaccharides containing three or more (1-&gt;4)-alpha-linked D-glucose units.. This Drosophila melanogaster (Fruit fly) protein is Alpha-amylase-related protein (Amyrel).